A 174-amino-acid chain; its full sequence is Adenine phosphoribosyltransferase (174 aa).

The protein belongs to the purine/pyrimidine phosphoribosyltransferase family. As to quaternary structure, homodimer.

The protein resides in the cytoplasm. It catalyses the reaction AMP + diphosphate = 5-phospho-alpha-D-ribose 1-diphosphate + adenine. The protein operates within purine metabolism; AMP biosynthesis via salvage pathway; AMP from adenine: step 1/1. Its function is as follows. Catalyzes a salvage reaction resulting in the formation of AMP, that is energically less costly than de novo synthesis. The polypeptide is Adenine phosphoribosyltransferase (Mycolicibacterium vanbaalenii (strain DSM 7251 / JCM 13017 / BCRC 16820 / KCTC 9966 / NRRL B-24157 / PYR-1) (Mycobacterium vanbaalenii)).